The following is a 405-amino-acid chain: FAD-dependent monooxygenase thnD (405 aa).

FAD contacts are provided by Glu30, Ala45, Arg106, Asp308, and Gly321.

It belongs to the paxM FAD-dependent monooxygenase family. FAD serves as cofactor.

Functionally, FAD-dependent monooxygenase; part of the gene cluster that produces the tetronate natural products trihazones. Transcription analysis of thnD confirmed this gene is expressed, hence its role in the biosynthetic pathway remains cryptic. The pathway begins with the formation of trihazone A by the hybrid PKS-NRPS synthetase thnA and the trans-enoyl reductase thnE. Trihazone A is further decarboxylated by the 2-oxoglutarate-dependent dioxygenase thnC to produce trihazone D. The function of the FAD-dependent monooxygenase thnD has still to be identified. The protein is FAD-dependent monooxygenase thnD of Trichoderma harzianum (Hypocrea lixii).